We begin with the raw amino-acid sequence, 249 residues long: Small ribosomal subunit protein uS3 (249 aa).

Residues 23-94 (LNEFFTRELS…TVELYAEKVQ (72 aa)) form the KH type-2 domain. A phosphoserine mark is found at S32, S37, S106, and S141.

It belongs to the universal ribosomal protein uS3 family. Component of the small ribosomal subunit (SSU). Mature yeast ribosomes consist of a small (40S) and a large (60S) subunit. The 40S small subunit contains 1 molecule of ribosomal RNA (18S rRNA) and at least 33 different proteins. The large 60S subunit contains 3 rRNA molecules (25S, 5.8S and 5S rRNA) and at least 46 different proteins.

The protein resides in the cytoplasm. In terms of biological role, component of the ribosome, a large ribonucleoprotein complex responsible for the synthesis of proteins in the cell. The small ribosomal subunit (SSU) binds messenger RNAs (mRNAs) and translates the encoded message by selecting cognate aminoacyl-transfer RNA (tRNA) molecules. The large subunit (LSU) contains the ribosomal catalytic site termed the peptidyl transferase center (PTC), which catalyzes the formation of peptide bonds, thereby polymerizing the amino acids delivered by tRNAs into a polypeptide chain. The nascent polypeptides leave the ribosome through a tunnel in the LSU and interact with protein factors that function in enzymatic processing, targeting, and the membrane insertion of nascent chains at the exit of the ribosomal tunnel. The chain is Small ribosomal subunit protein uS3 (rps3) from Schizosaccharomyces pombe (strain 972 / ATCC 24843) (Fission yeast).